We begin with the raw amino-acid sequence, 77 residues long: Putative snRNP Sm-like protein (77 aa).

A Sm domain is found at 4–76 (RPLDVLNRSL…VVFVSPAPGG (73 aa)).

Belongs to the snRNP Sm proteins family.

The chain is Putative snRNP Sm-like protein from Archaeoglobus fulgidus (strain ATCC 49558 / DSM 4304 / JCM 9628 / NBRC 100126 / VC-16).